A 254-amino-acid chain; its full sequence is 2-dehydro-3-deoxy-D-gluconate 5-dehydrogenase (254 aa).

Position 16 to 40 (16 to 40) interacts with NAD(+); the sequence is LVTGPGTGIGQGIAKALAGAGADII. Residue S146 participates in substrate binding. Y159 (proton acceptor) is an active-site residue.

Belongs to the short-chain dehydrogenases/reductases (SDR) family.

The enzyme catalyses 2-dehydro-3-deoxy-D-gluconate + NAD(+) = 3-deoxy-D-glycero-2,5-hexodiulosonate + NADH + H(+). The protein operates within glycan metabolism; pectin degradation; 2-dehydro-3-deoxy-D-gluconate from pectin: step 5/5. Functionally, catalyzes the reduction of 2,5-diketo-3-deoxygluconate (DKII or 4,6-dihydroxy-2,5-dioxohexanoate) into 2-keto-3-deoxygluconate (KDG or 2-dehydro-3-deoxygluconate) with a concomitant oxidation of NADH. The chain is 2-dehydro-3-deoxy-D-gluconate 5-dehydrogenase (kduD) from Bacillus subtilis (strain 168).